We begin with the raw amino-acid sequence, 302 residues long: Probable alpha-L-glutamate ligase (302 aa).

The 183-residue stretch at 112-294 (LQLLLKTGVP…IAAEIIDYIE (183 aa)) folds into the ATP-grasp domain. Residues Lys148, 185 to 186 (DF), Asp194, and 218 to 220 (RAN) contribute to the ATP site. Mg(2+) contacts are provided by Asp255, Glu267, and Asn269. Mn(2+)-binding residues include Asp255, Glu267, and Asn269.

The protein belongs to the RimK family. The cofactor is Mg(2+). It depends on Mn(2+) as a cofactor.

This Haemophilus influenzae (strain 86-028NP) protein is Probable alpha-L-glutamate ligase.